The chain runs to 237 residues: Flagellar L-ring protein (237 aa).

Positions 1-24 are cleaved as a signal peptide; the sequence is MNRLSVPRFSVLIASLCGITLLSG. A lipid anchor (N-palmitoyl cysteine) is attached at cysteine 25. The S-diacylglycerol cysteine moiety is linked to residue cysteine 25.

It belongs to the FlgH family. In terms of assembly, the basal body constitutes a major portion of the flagellar organelle and consists of four rings (L,P,S, and M) mounted on a central rod.

The protein localises to the cell outer membrane. It localises to the bacterial flagellum basal body. In terms of biological role, assembles around the rod to form the L-ring and probably protects the motor/basal body from shearing forces during rotation. The chain is Flagellar L-ring protein from Pseudomonas syringae pv. syringae (strain B728a).